The chain runs to 375 residues: MAGKEKAVWPPVWAAGAMSGTSFDGVDVALLLTDGVRIEAFGDAREVAYSDADRAILREAMGAWPGEARAEVAAQVVEAAHITAMVDLPDVALLGFHGQTLAHDPEARRTHQVGDGAVLANALGVEVIWDFRSADMGLGGQGAPLAPFYHWACARWIGAQGPVAILNLGGVGNITWVDPSIEGPELPGACLAFDTGPANAPIDDLMVRRGLGACDVGGALAARGEIDLKILEEALEAPWFDLAPPKSLDRDAFSGLADAVSGLSDADASATLTAVSAGAVARGLAHLSSRPRQVLVAGGGRKNATLMAMVQDALGCDVRAVEDVGLNGDALEAQAFAYLAVRVARGLPTSAPSTTGVAAPVGGGRRSKPGARELS.

ATP is bound at residue 20-27; it reads GTSFDGVD. The interval 351–375 is disordered; the sequence is APSTTGVAAPVGGGRRSKPGARELS.

The protein belongs to the anhydro-N-acetylmuramic acid kinase family.

It catalyses the reaction 1,6-anhydro-N-acetyl-beta-muramate + ATP + H2O = N-acetyl-D-muramate 6-phosphate + ADP + H(+). It functions in the pathway amino-sugar metabolism; 1,6-anhydro-N-acetylmuramate degradation. It participates in cell wall biogenesis; peptidoglycan recycling. Functionally, catalyzes the specific phosphorylation of 1,6-anhydro-N-acetylmuramic acid (anhMurNAc) with the simultaneous cleavage of the 1,6-anhydro ring, generating MurNAc-6-P. Is required for the utilization of anhMurNAc either imported from the medium or derived from its own cell wall murein, and thus plays a role in cell wall recycling. The protein is Anhydro-N-acetylmuramic acid kinase 1 of Jannaschia sp. (strain CCS1).